We begin with the raw amino-acid sequence, 858 residues long: Ubiquitin carboxyl-terminal hydrolase 5 (858 aa).

Ala-2 carries the post-translational modification N-acetylalanine. Residues 73–98 (LRRTRRPKEEDTSAGTGDPPRKKPTR) are disordered. A Glycyl lysine isopeptide (Lys-Gly) (interchain with G-Cter in SUMO) cross-link involves residue Lys-113. Residues Ser-149 and Ser-156 each carry the phosphoserine modification. A UBP-type; degenerate zinc finger spans residues 175 to 283 (QVSKHAFNLK…EHLSHFGIDM (109 aa)). Cys-195 and Cys-816 form a disulfide bridge. Residues Cys-199 and Cys-202 each coordinate Zn(2+). Position 209 (Trp-209) interacts with substrate. Cys-219 is a binding site for Zn(2+). 221-224 (RRYF) contacts substrate. His-232 lines the Zn(2+) pocket. Substrate is bound by residues Tyr-259, Tyr-261, and Asp-264. Thr-292 bears the Phosphothreonine mark. In terms of domain architecture, USP spans 326-856 (TGIRNLGNSC…LGYIYFYQRV (531 aa)). Cys-335 (nucleophile) is an active-site residue. Thr-623 is subject to Phosphothreonine. 2 consecutive UBA domains span residues 654-695 (MLDE…VMSH) and 722-762 (PPPE…IFSH). Phosphoserine occurs at positions 779, 783, and 785. The Proton acceptor role is filled by His-818.

Belongs to the peptidase C19 family. In terms of assembly, homodimer. Interacts with TRIML1. Post-translationally, SUMOylated at Lys-113; SUMOylation affects the interaction with Cav3.2 channels. Ubiquitinated by SMURF1; leading to proteasomal degradation.

It is found in the cytoplasm. Its subcellular location is the stress granule. The protein localises to the nucleus. It catalyses the reaction Thiol-dependent hydrolysis of ester, thioester, amide, peptide and isopeptide bonds formed by the C-terminal Gly of ubiquitin (a 76-residue protein attached to proteins as an intracellular targeting signal).. Deubiquitinating enzyme that participates in a wide range of cellular processes by specifically cleaving isopeptide bonds between ubiquitin and substrate proteins or ubiquitin itself. Affects thereby important cellular signaling pathways such as NF-kappa-B, Wnt/beta-catenin, and cytokine production by regulating ubiquitin-dependent protein degradation. Participates in the activation of the Wnt signaling pathway by promoting FOXM1 deubiquitination and stabilization that induces the recruitment of beta-catenin to Wnt target gene promoter. Regulates the assembly and disassembly of heat-induced stress granules by mediating the hydrolysis of unanchored ubiquitin chains. Promotes lipopolysaccharide-induced apoptosis and inflammatory response by stabilizing the TXNIP protein. Affects T-cell biology by stabilizing the inhibitory receptor on T-cells PDC1. Acts as a negative regulator of autophagy by regulating ULK1 at both protein and mRNA levels. Acts also as a negative regulator of type I interferon production by simultaneously removing both 'Lys-48'-linked unanchored and 'Lys-63'-linked anchored polyubiquitin chains on the transcription factor IRF3. Modulates the stability of DNA mismatch repair protein MLH1 and counteracts the effect of the ubiquitin ligase UBR4. Upon activation by insulin, it gets phosphorylated through mTORC1-mediated phosphorylation to enhance YTHDF1 stability by removing 'Lys-11'-linked polyubiquitination. May also deubiquitinate other substrates such as the calcium channel CACNA1H. The sequence is that of Ubiquitin carboxyl-terminal hydrolase 5 (Usp5) from Mus musculus (Mouse).